Consider the following 158-residue polypeptide: Regulator of sigma D (158 aa).

Belongs to the Rsd/AlgQ family. In terms of assembly, interacts with RpoD.

Its subcellular location is the cytoplasm. Its function is as follows. Binds RpoD and negatively regulates RpoD-mediated transcription activation by preventing the interaction between the primary sigma factor RpoD with the catalytic core of the RNA polymerase and with promoter DNA. May be involved in replacement of the RNA polymerase sigma subunit from RpoD to RpoS during the transition from exponential growth to the stationary phase. The sequence is that of Regulator of sigma D from Escherichia coli O6:H1 (strain CFT073 / ATCC 700928 / UPEC).